A 536-amino-acid chain; its full sequence is ATPase expression protein 3 (536 aa).

PPR repeat units lie at residues 212–246 (TTTM…KKTP) and 386–421 (TTGS…GVTP).

The protein resides in the mitochondrion inner membrane. Functionally, required for respiration. The sequence is that of ATPase expression protein 3 (AEP3) from Eremothecium gossypii (strain ATCC 10895 / CBS 109.51 / FGSC 9923 / NRRL Y-1056) (Yeast).